Here is a 257-residue protein sequence, read N- to C-terminus: MDRIIEKLESGWWIVSHEQKLWLPYGELPHGLAANFDLVGQRALRIGEWQGEPVWLVLQHRRHDMGSVRQVIDQDAGLFQLAGRGVQLAEFYRSHKFCGYCGHPMHPSKTEWAMLCSHCRERYYPQIAPCIIVAIRREDSILLAQHVRHRNGVHTVLAGFVEVGETLEQAVAREVMEESGIKVKNLRYITSQPWPFPQSLMTAFMAEYDSGEIVIDPKELLEANWYRYDDLPLLPPPGTVARRLIEDTVAMCRAEYD.

Arg-69 lines the substrate pocket. Residues Cys-98 and Cys-101 each coordinate Zn(2+). Glu-111 serves as a coordination point for substrate. Cys-116 and Cys-119 together coordinate Zn(2+). Tyr-124 serves as a coordination point for substrate. The 124-residue stretch at 125–248 folds into the Nudix hydrolase domain; the sequence is PQIAPCIIVA…TVARRLIEDT (124 aa). A divalent metal cation contacts are provided by Ala-158, Glu-174, and Glu-178. Positions 159 to 180 match the Nudix box motif; sequence GFVEVGETLEQAVAREVMEESG. 192–199 is a substrate binding site; that stretch reads QPWPFPQS. Glu-219 lines the a divalent metal cation pocket. Ala-241 lines the substrate pocket.

The protein belongs to the Nudix hydrolase family. NudC subfamily. In terms of assembly, homodimer. Requires Mg(2+) as cofactor. Mn(2+) serves as cofactor. It depends on Zn(2+) as a cofactor.

It carries out the reaction a 5'-end NAD(+)-phospho-ribonucleoside in mRNA + H2O = a 5'-end phospho-adenosine-phospho-ribonucleoside in mRNA + beta-nicotinamide D-ribonucleotide + 2 H(+). It catalyses the reaction NAD(+) + H2O = beta-nicotinamide D-ribonucleotide + AMP + 2 H(+). The enzyme catalyses NADH + H2O = reduced beta-nicotinamide D-ribonucleotide + AMP + 2 H(+). MRNA decapping enzyme that specifically removes the nicotinamide adenine dinucleotide (NAD) cap from a subset of mRNAs by hydrolyzing the diphosphate linkage to produce nicotinamide mononucleotide (NMN) and 5' monophosphate mRNA. The NAD-cap is present at the 5'-end of some mRNAs and stabilizes RNA against 5'-processing. Has preference for mRNAs with a 5'-end purine. Catalyzes the hydrolysis of a broad range of dinucleotide pyrophosphates. The protein is NAD-capped RNA hydrolase NudC of Salmonella agona (strain SL483).